A 374-amino-acid polypeptide reads, in one-letter code: 4-galactosyl-N-acetylglucosaminide 3-alpha-L-fucosyltransferase FUT5 (374 aa).

The Cytoplasmic portion of the chain corresponds to methionine 1–arginine 15. A helical; Signal-anchor for type II membrane protein transmembrane segment spans residues cysteine 16–leucine 34. At arginine 35–threonine 374 the chain is on the lumenal side. 4 N-linked (GlcNAc...) asparagine glycosylation sites follow: asparagine 60, asparagine 105, asparagine 167, and asparagine 198.

Belongs to the glycosyltransferase 10 family. In terms of tissue distribution, liver, colon and testis and trace amounts in T-cells and brain.

The protein resides in the golgi apparatus. It localises to the golgi stack membrane. The catalysed reaction is a beta-D-galactosyl-(1-&gt;3)-N-acetyl-beta-D-glucosaminyl derivative + GDP-beta-L-fucose = a beta-D-galactosyl-(1-&gt;3)-[alpha-L-fucosyl-(1-&gt;4)]-N-acetyl-beta-D-glucosaminyl derivative + GDP + H(+). The enzyme catalyses an N-acetyl-alpha-neuraminyl-(2-&gt;3)-beta-D-galactosyl-(1-&gt;4)-N-acetyl-beta-D-glucosaminyl derivative + GDP-beta-L-fucose = an alpha-Neu5Ac-(2-&gt;3)-beta-D-Gal-(1-&gt;4)-[alpha-L-Fuc-(1-&gt;3)]-beta-D-GlcNAc derivative + GDP + H(+). It carries out the reaction an alpha-Neu5Ac-(2-&gt;3)-beta-D-Gal-(1-&gt;4)-beta-D-GlcNAc-(1-&gt;3)-beta-D-Gal-(1-&gt;4)-[alpha-L-Fuc-(1-&gt;3)]-beta-D-GlcNAc derivative + GDP-beta-L-fucose = an alpha-Neu5Ac-(2-&gt;3)-beta-D-Gal-(1-&gt;4)-[alpha-L-Fuc-(1-&gt;3)]-beta-D-GlcNAc-(1-&gt;3)-beta-D-Gal-(1-&gt;4)-[alpha-L-Fuc-(1-&gt;3)]-beta-D-GlcNAc derivative + GDP + H(+). It catalyses the reaction a beta-D-galactosyl-(1-&gt;4)-N-acetyl-beta-D-glucosaminyl derivative + GDP-beta-L-fucose = a beta-D-galactosyl-(1-&gt;4)-[alpha-L-fucosyl-(1-&gt;3)]-N-acetyl-beta-D-glucosaminyl derivative + GDP + H(+). The catalysed reaction is a neolactoside nLc4Cer + GDP-beta-L-fucose = a neolactoside III(3)-alpha-Fuc-nLc4Cer + GDP + H(+). The enzyme catalyses a neolactoside nLc6Cer + GDP-beta-L-fucose = beta-D-galactosyl-(1-&gt;4)-N-acetyl-beta-D-glucosaminyl-(1-&gt;3)-beta-D-galactosyl-(1-&gt;4)-[alpha-L-fucosyl-(1-&gt;3)]-N-acetyl-beta-D-glucosaminyl-(1-&gt;3)-beta-D-galactosyl-(1-&gt;4)-beta-D-glucosyl-(1&lt;-&gt;1')-ceramide + GDP + H(+). It carries out the reaction a neolactoside nLc6Cer(d18:1(4E)) + GDP-beta-L-fucose = a neolactoside III(3)-alpha-Fuc-nLc6Cer(d18:1(4E)) + GDP + H(+). It catalyses the reaction a neolactoside nLc4Cer(d18:1(4E)) + GDP-beta-L-fucose = a neolactoside III(3)-alpha-Fuc-nLc4Cer(d18:1(4E)) + GDP + H(+). The catalysed reaction is a neolactoside VI(3)-alpha-NeuNAc-nLc6Cer + GDP-beta-L-fucose = a neolactoside VI(3)-alpha-NeuAc,III(3)-alphaFuc-nLc6Cer + GDP + H(+). The enzyme catalyses beta-D-galactosyl-(1-&gt;4)-N-acetyl-D-glucosamine + GDP-beta-L-fucose = beta-D-galactosyl-(1-&gt;4)-[alpha-L-fucosyl-(1-&gt;3)]-N-acetyl-D-glucosamine + GDP + H(+). It carries out the reaction N-acetyl-alpha-neuraminosyl-(2-&gt;3)-beta-D-galactosyl-(1-&gt;4)-N-acetyl-beta-D-glucosamine + GDP-beta-L-fucose = N-acetyl-alpha-neuraminosyl-(2-&gt;3)-beta-D-galactosyl-(1-&gt;4)-[alpha-L-fucosyl-(1-&gt;3)]-N-acetyl-beta-D-glucosamine + GDP + H(+). It catalyses the reaction alpha-L-Fuc-(1-&gt;2)-beta-D-Gal-(1-&gt;4)-D-GlcNAc + GDP-beta-L-fucose = alpha-L-Fuc-(1-&gt;2)-beta-D-Gal-(1-&gt;4)-[alpha-L-Fuc-(1-&gt;3)]-D-GlcNAc + GDP + H(+). The catalysed reaction is an alpha-Neu5Ac-(2-&gt;3)-beta-D-Gal-(1-&gt;3)-D-GlcNAc derivative + GDP-beta-L-fucose = an alpha-Neu5Ac-(2-&gt;3)-beta-D-Gal-(1-&gt;3)-[alpha-L-Fuc-(1-&gt;4)]-beta-D-GlcNAc derivative + GDP + H(+). It participates in protein modification; protein glycosylation. Catalyzes preferentially the transfer of L-fucose, from a guanosine diphosphate-beta-L-fucose, to the N-acetyl-beta-D-glucosamine (GlcNAc) of an N-acetyllactosamine unit (type 2 chain) of an oligosaccharide, or a glycoprotein- and a glycolipid-linked N-acetyllactosamine unit via an alpha (1,3) linkage and participates in the surface expression of VIM-2, Lewis X/SSEA-1 and sialyl Lewis X antigens. Preferentially transfers fucose to the GlcNAc of an internal N-acetyllactosamine unit of a poly-N-acetyllactosamine chain acceptor substrate. Also catalyzes to a lesser extend the transfer of L-fucose to the GlcNAc of a type 1 (beta-D-galactosyl-(1-&gt;3)-N-acetyl-beta-D-glucosaminyl) or H-type 1 (alpha-L-Fuc-(1-&gt;2)-beta-D-Gal-(1-&gt;3)-D-GlcNAc) chain oligosaccharide via an alpha (1,4) linkage. Preferentially catalyzes sialylated type 2 oligosaccharide acceptors over neutral type 2 or H type 2 (alpha-L-Fuc-(1-&gt;2)-beta-D-Gal-(1-&gt;4)-D-GlcNAc) oligosaccharide acceptors. Lactose-based structures are also acceptor substrates. This is 4-galactosyl-N-acetylglucosaminide 3-alpha-L-fucosyltransferase FUT5 from Homo sapiens (Human).